A 354-amino-acid polypeptide reads, in one-letter code: Transcription termination factor 3, mitochondrial (354 aa).

The N-terminal 89 residues, 1–89, are a transit peptide targeting the mitochondrion; that stretch reads MFCSALRNIL…SFNLAAYVNN (89 aa).

Belongs to the mTERF family.

The protein resides in the mitochondrion. Binds promoter DNA and regulates initiation of transcription. Regulator of mitochondrial ribosome biogenesis and translation that is essential for development. Required for normal mitochondrial transcription and translation. Required for assembly of mitochondrial respiratory complexes and normal mitochondrial function. Maintains 16S rRNA levels and functions in mitochondrial ribosome assembly by regulating the biogenesis of the 39S ribosomal subunit. This is Transcription termination factor 3, mitochondrial from Drosophila melanogaster (Fruit fly).